Reading from the N-terminus, the 434-residue chain is MMTTLRKLPLALAIAAGVLTTQAMAVDFKGYARSGIGWTGSGGEQQCFKATGADSKYRLGNECETYAELKLGQEVWKEGDKSFYFDTNLAYSVSQRSDWEDVTPGFREVNVQGKNLIEWLPGANMWAGKRFYQRHDVHMIDFYYWDISGPGAGLENIDLGFGKLSAAVTRNSESGGSYGYLDNELDQRPTVNDTFDVRLAGLELNPGGTLELGLDYGRANAQDGYSLADGASKDGWLVTAEHTQSILTGYNKFVLQYATDSMTSQNNGRNQGSTIDNNGKMIRVLDHGAIDFNDQWAMMYVAMFQDIDRDNNNGSTWYTVGVRPMYKWTPIMSTLLEAGYDNVKSQRTGDRNGQYKVTLAQQWQAGNSIWSRPAIRVFATYAKWDEKWGYATSSDAEGNPGLKAGTAYNDTSMHTFSRGNDDEVTFGAQMEIWW.

Positions 1–25 (MMTTLRKLPLALAIAAGVLTTQAMA) are cleaved as a signal peptide.

It belongs to the porin LamB (TC 1.B.3) family. Homotrimer formed of three 18-stranded antiparallel beta-barrels, containing three independent channels.

It is found in the cell outer membrane. It carries out the reaction beta-maltose(in) = beta-maltose(out). Its function is as follows. Involved in the transport of maltose and maltodextrins. The protein is Maltoporin of Serratia proteamaculans (strain 568).